The sequence spans 538 residues: MFS-type transporter tndD (538 aa).

Residues 1 to 42 (MSLSGSDSHLAVSPTLAEDMNSSDTSAGLAETPPADEEKRSI) are disordered. 2 N-linked (GlcNAc...) asparagine glycosylation sites follow: asparagine 21 and asparagine 71. Helical transmembrane passes span 81-101 (VGIVSALTFITPLASSMFAPG), 115-135 (LLAGFVVSVYVLGFAIGPLIL), 153-173 (ICFTVFSIACALSTNLGMLIA), 203-223 (GGVIAIYALGPLLGPVIGPVA), 235-255 (WVFWVLAIVGGGCTLASFLFL), 309-329 (PIVAASSVYVGIVYGYQYLMF), 348-368 (GLTFLGTGVGSLLGLFVIGAV), 394-414 (LPPLVWGAFFIPAGLFMYGWS), 422-442 (IVPIIGTGLVGIGNIAVFMCI), 444-464 (SYLVDAFTIFAASALAANTVV), and 485-505 (LGWGNSLLGFIAVVCIPIPWA).

It belongs to the major facilitator superfamily.

The protein resides in the membrane. In terms of biological role, MFS-type transporter; part of the gene cluster that mediates the biosynthesis of talaronoid C, a fusicoccane diterpenoid with an unprecedented tricyclic 5/8/6 ring system. This is MFS-type transporter tndD from Aspergillus flavipes.